A 971-amino-acid chain; its full sequence is Translation initiation factor IF-2 (971 aa).

Positions 49-63 (HLRKSHGATDGDKRK) are enriched in basic and acidic residues. Disordered stretches follow at residues 49–85 (HLRK…KART) and 99–386 (RDDV…PTEP). A compositionally biased stretch (low complexity) spans 105-114 (GAEQGQAQVA). Positions 121-181 (ELKRREEEAR…EEEAAAKRAA (61 aa)) are enriched in basic and acidic residues. The span at 182-200 (AEAAAAQQAAAQQAAAEQE) shows a compositional bias: low complexity. Positions 209-260 (DEARAAAERAAQREAAKKAEDAAREAADKARAEQEEISKRRAAAEAEARAIR) are enriched in basic and acidic residues. Low complexity predominate over residues 303–325 (ARPAVKKPAGAAAPATTQAPAGA). A compositionally biased stretch (gly residues) spans 355–368 (SSGGVDRGWRGGPK). The tr-type G domain occupies 471–640 (PRPPVVTVMG…LLQAEVLELK (170 aa)). A G1 region spans residues 480–487 (GHVDHGKT). 480–487 (GHVDHGKT) lines the GTP pocket. The G2 stretch occupies residues 505 to 509 (GITQH). A G3 region spans residues 526 to 529 (DTPG). GTP is bound by residues 526–530 (DTPGH) and 580–583 (NKID). The interval 580–583 (NKID) is G4. Positions 616-618 (SAK) are G5.

Belongs to the TRAFAC class translation factor GTPase superfamily. Classic translation factor GTPase family. IF-2 subfamily.

The protein resides in the cytoplasm. Functionally, one of the essential components for the initiation of protein synthesis. Protects formylmethionyl-tRNA from spontaneous hydrolysis and promotes its binding to the 30S ribosomal subunits. Also involved in the hydrolysis of GTP during the formation of the 70S ribosomal complex. This Burkholderia cenocepacia (strain ATCC BAA-245 / DSM 16553 / LMG 16656 / NCTC 13227 / J2315 / CF5610) (Burkholderia cepacia (strain J2315)) protein is Translation initiation factor IF-2.